The sequence spans 34 residues: Cytochrome b6-f complex subunit 8 (34 aa).

The chain crosses the membrane as a helical span at residues 3-23 (LLTFGWAALLAVFTFSLAMVV).

Belongs to the PetN family. As to quaternary structure, the 4 large subunits of the cytochrome b6-f complex are cytochrome b6, subunit IV (17 kDa polypeptide, PetD), cytochrome f and the Rieske protein, while the 4 small subunits are PetG, PetL, PetM and PetN. The complex functions as a dimer.

It is found in the cellular thylakoid membrane. In terms of biological role, component of the cytochrome b6-f complex, which mediates electron transfer between photosystem II (PSII) and photosystem I (PSI), cyclic electron flow around PSI, and state transitions. This is Cytochrome b6-f complex subunit 8 from Synechococcus elongatus (strain ATCC 33912 / PCC 7942 / FACHB-805) (Anacystis nidulans R2).